The primary structure comprises 66 residues: Large ribosomal subunit protein bL33c (66 aa).

It belongs to the bacterial ribosomal protein bL33 family.

Its subcellular location is the plastid. It is found in the chloroplast. The polypeptide is Large ribosomal subunit protein bL33c (Agrostis stolonifera (Creeping bentgrass)).